Here is a 321-residue protein sequence, read N- to C-terminus: uncharacterized protein (321 aa).

The Extracellular segment spans residues 1–6; that stretch reads MDIIRK. A helical membrane pass occupies residues 7-29; the sequence is ISHFAGQTFGIWVIVFAVLGFSF. At 30-34 the chain is on the cytoplasmic side; that stretch reads PSLFT. The chain crosses the membrane as a helical span at residues 35-57; that stretch reads WISSYITIFLGIIMFGMGLTLQA. The Extracellular portion of the chain corresponds to 58–69; sequence DDFKELVRKPWQ. The helical transmembrane segment at 70–92 threads the bilayer; sequence VIIGVIAQYTIMPLVAFGLAFGL. Residues 93–97 lie on the Cytoplasmic side of the membrane; that stretch reads HLPAE. Residues 98–120 form a helical membrane-spanning segment; the sequence is IAVGVILVGCCPGGTASNVMTFL. At 121-129 the chain is on the extracellular side; sequence AKGNTALSV. The chain crosses the membrane as a helical span at residues 130 to 150; sequence AVTTISTLLAPVVTPLLIMLF. Topologically, residues 151–159 are cytoplasmic; it reads AKEWLPVSP. The chain crosses the membrane as a helical span at residues 160–180; it reads GSLFISILQAVLFPIIAGLIV. The Extracellular segment spans residues 181–190; it reads KMFFRKQVAK. Residues 191-211 form a helical membrane-spanning segment; the sequence is AVHALPLVSVIGIVAIVSAVV. Residues 212–221 are Cytoplasmic-facing; sequence SGNRENLLQS. The chain crosses the membrane as a helical span at residues 222 to 242; the sequence is GLLIFSVVILHNGIGYLLGFL. The Extracellular segment spans residues 243–267; that stretch reads CAKLLKMDYPSQKAIAIEVGMQNSG. The chain crosses the membrane as a helical span at residues 268–288; the sequence is LGAALATAHFSPLSAVPSAIF. Residues 289–321 are Cytoplasmic-facing; that stretch reads SVWHNLSGSMLATYWSKKVKKKQAGSKSSNLSL.

Belongs to the bile acid:sodium symporter (BASS) (TC 2.A.28) family.

Its subcellular location is the cell membrane. This is an uncharacterized protein from Bacillus subtilis (strain 168).